Reading from the N-terminus, the 511-residue chain is GMP synthase [glutamine-hydrolyzing] (511 aa).

Positions 5-195 (DILVLDFGSQ…AKYACNCESV (191 aa)) constitute a Glutamine amidotransferase type-1 domain. The active-site Nucleophile is the Cys82. Catalysis depends on residues His169 and Glu171. Residues 196-386 (WNMGSFAKTQ…LGLSKEVVYR (191 aa)) form the GMPS ATP-PPase domain. Residue 223–229 (SGGVDSS) participates in ATP binding.

Homodimer.

It carries out the reaction XMP + L-glutamine + ATP + H2O = GMP + L-glutamate + AMP + diphosphate + 2 H(+). The protein operates within purine metabolism; GMP biosynthesis; GMP from XMP (L-Gln route): step 1/1. Catalyzes the synthesis of GMP from XMP. This Campylobacter jejuni subsp. doylei (strain ATCC BAA-1458 / RM4099 / 269.97) protein is GMP synthase [glutamine-hydrolyzing].